A 316-amino-acid polypeptide reads, in one-letter code: N-acetylmuramic acid 6-phosphate etherase (316 aa).

The interval 1–25 (MAVFDPDLQPSSDRGHLLTEQSNQR) is disordered. Positions 66 to 229 (VANRLRAGGR…STAVMVKLGK (164 aa)) constitute an SIS domain. Glu-94 functions as the Proton donor in the catalytic mechanism. The active site involves Glu-125.

It belongs to the GCKR-like family. MurNAc-6-P etherase subfamily. As to quaternary structure, homodimer.

The enzyme catalyses N-acetyl-D-muramate 6-phosphate + H2O = N-acetyl-D-glucosamine 6-phosphate + (R)-lactate. It participates in amino-sugar metabolism; N-acetylmuramate degradation. Functionally, specifically catalyzes the cleavage of the D-lactyl ether substituent of MurNAc 6-phosphate, producing GlcNAc 6-phosphate and D-lactate. This Synechococcus sp. (strain CC9605) protein is N-acetylmuramic acid 6-phosphate etherase.